The chain runs to 102 residues: RNA-binding protein Hfq (102 aa).

One can recognise a Sm domain in the interval 9-68; the sequence is DPFLNALRRERVPVSIYLVNGIKLQGQIESFDQFVILLKNTVSQMVYKHAISTVVPSRPV. Residues 63–102 are disordered; that stretch reads VPSRPVSHHSNNAGGGTSSNYHHGSSPQNTSAQQDSEETE. Residues 70-96 show a composition bias toward polar residues; it reads HHSNNAGGGTSSNYHHGSSPQNTSAQQ.

The protein belongs to the Hfq family. In terms of assembly, homohexamer.

Its function is as follows. RNA chaperone that binds small regulatory RNA (sRNAs) and mRNAs to facilitate mRNA translational regulation in response to envelope stress, environmental stress and changes in metabolite concentrations. Also binds with high specificity to tRNAs. In Shigella dysenteriae serotype 1 (strain Sd197), this protein is RNA-binding protein Hfq.